The primary structure comprises 75 residues: Small ribosomal subunit protein bS18 (75 aa).

The protein belongs to the bacterial ribosomal protein bS18 family. In terms of assembly, part of the 30S ribosomal subunit. Forms a tight heterodimer with protein bS6.

Binds as a heterodimer with protein bS6 to the central domain of the 16S rRNA, where it helps stabilize the platform of the 30S subunit. The protein is Small ribosomal subunit protein bS18 of Moorella thermoacetica (strain ATCC 39073 / JCM 9320).